Consider the following 218-residue polypeptide: 3,4-dihydroxy-2-butanone 4-phosphate synthase (218 aa).

D-ribulose 5-phosphate contacts are provided by residues 37–38, D42, 150–154, and E174; these read RE and RSGHT. E38 serves as a coordination point for Mg(2+). H153 provides a ligand contact to Mg(2+).

It belongs to the DHBP synthase family. Homodimer. Requires Mg(2+) as cofactor. The cofactor is Mn(2+).

It carries out the reaction D-ribulose 5-phosphate = (2S)-2-hydroxy-3-oxobutyl phosphate + formate + H(+). Its pathway is cofactor biosynthesis; riboflavin biosynthesis; 2-hydroxy-3-oxobutyl phosphate from D-ribulose 5-phosphate: step 1/1. Its function is as follows. Catalyzes the conversion of D-ribulose 5-phosphate to formate and 3,4-dihydroxy-2-butanone 4-phosphate. The sequence is that of 3,4-dihydroxy-2-butanone 4-phosphate synthase from Hamiltonella defensa subsp. Acyrthosiphon pisum (strain 5AT).